We begin with the raw amino-acid sequence, 1368 residues long: Cingulin (1368 aa).

The segment at 9–378 (MADQHIPVGQ…KQQRTVQSEF (370 aa)) is interaction with TJP3/ZO3 and myosin. The head stretch occupies residues 9–435 (MADQHIPVGQ…EKLPSLQVQP (427 aa)). The ZIM signature appears at 41–55 (QDSYGVAVRVQGIDG). 5 disordered regions span residues 71-264 (FGVQ…TKPL), 278-312 (GQVR…DTAD), 1053-1080 (SRKE…NSSR), 1163-1183 (NRSR…RSRG), and 1308-1368 (QQEI…TSSC). The span at 83 to 97 (NASNTSPPNYQNYSS) shows a compositional bias: polar residues. Positions 101 to 294 (GPSRSISSES…ARRSQALKDE (194 aa)) are interaction with F-actin. Low complexity-rich tracts occupy residues 116–132 (PYGS…YSSA) and 200–211 (SQSSRDSAWSRS). Positions 150-295 (SSLPRPLQAS…RRSQALKDER (146 aa)) are interaction with TJP2/ZO2. Residues 228 to 256 (SATSQQSTSVSNKTKKNGLSTSSPSNQSN) show a composition bias toward polar residues. Residues 290-312 (ALKDERKRSQSLDGRKNYHDTAD) are compositionally biased toward basic and acidic residues. Residues 377–1368 (EFQLKSTPDL…TESNLQTSSC (992 aa)) form an interaction with myosin region. Positions 436–1330 (GEDTISLGSQ…VMEKESKRKP (895 aa)) form a coiled coil. Residues 1320-1338 (KVMEKESKRKPIRPAHDDD) are compositionally biased toward basic and acidic residues. The segment at 1331 to 1368 (IRPAHDDDLSSDGEFGGPYDPSSITSLLTESNLQTSSC) is tail. Polar residues predominate over residues 1352-1368 (SSITSLLTESNLQTSSC).

It belongs to the cingulin family. In terms of assembly, parallel homodimer. Interacts with TJP1/ZO1 and TJP2/ZO2 in vivo, and TJP3/ZO3, myosin and OCLN in vitro, possibly directly. Acts as an F-actin bundling protein in vitro. Localized on the cytoplasmic face of tight junctions of polarized epithelia and some endothelia.

It is found in the cell junction. The protein localises to the tight junction. Probably plays a role in the formation and regulation of the tight junction (TJ) paracellular permeability barrier, possibly by linking ZO proteins to the actomyosin cytoskeleton. This chain is Cingulin, found in Xenopus laevis (African clawed frog).